The following is a 939-amino-acid chain: Translation initiation factor IF-2 (939 aa).

2 disordered regions span residues 51–81 (LGTKESGQDTGQATNEAAAAHRPTTVIGGKK) and 137–353 (VTNK…EMKA). The segment covering 181–210 (NEKKAGAPEIKRAEHTETVEKSKTAVDSKK) has biased composition (basic and acidic residues). Over residues 259–277 (PVNRSPRPSTPSPNRSAGG) the composition is skewed to low complexity. The span at 300–312 (RRDEKPAERDSRP) shows a compositional bias: basic and acidic residues. The tr-type G domain occupies 437–606 (GRCPVVTVMG…QLAAEMLELK (170 aa)). The G1 stretch occupies residues 446–453 (GHVDHGKT). Position 446–453 (446–453 (GHVDHGKT)) interacts with GTP. The G2 stretch occupies residues 471–475 (GITQH). The segment at 492-495 (DTPG) is G3. Residues 492–496 (DTPGH) and 546–549 (NKID) each bind GTP. Residues 546–549 (NKID) form a G4 region. Positions 582–584 (SAK) are G5.

The protein belongs to the TRAFAC class translation factor GTPase superfamily. Classic translation factor GTPase family. IF-2 subfamily.

It localises to the cytoplasm. One of the essential components for the initiation of protein synthesis. Protects formylmethionyl-tRNA from spontaneous hydrolysis and promotes its binding to the 30S ribosomal subunits. Also involved in the hydrolysis of GTP during the formation of the 70S ribosomal complex. This is Translation initiation factor IF-2 from Desulfotalea psychrophila (strain LSv54 / DSM 12343).